The sequence spans 20 residues: Hemoglobinase-like protein 1 (20 aa).

Belongs to the peptidase C13 family.

It catalyses the reaction Hydrolysis of proteins and small molecule substrates at -Asn-|-Xaa- bonds.. The protein is Hemoglobinase-like protein 1 of Fasciola hepatica (Liver fluke).